A 467-amino-acid chain; its full sequence is Cysteine--tRNA ligase (467 aa).

Position 27 (Cys27) interacts with Zn(2+). The 'HIGH' region motif lies at 29-39 (ATVQGLPHIGH). Zn(2+) is bound by residues Cys209, His234, and Glu238. The short motif at 265–269 (KMSKS) is the 'KMSKS' region element. An ATP-binding site is contributed by Lys268.

The protein belongs to the class-I aminoacyl-tRNA synthetase family. As to quaternary structure, monomer. It depends on Zn(2+) as a cofactor.

The protein localises to the cytoplasm. The catalysed reaction is tRNA(Cys) + L-cysteine + ATP = L-cysteinyl-tRNA(Cys) + AMP + diphosphate. The polypeptide is Cysteine--tRNA ligase (Mycolicibacterium gilvum (strain PYR-GCK) (Mycobacterium gilvum (strain PYR-GCK))).